A 408-amino-acid polypeptide reads, in one-letter code: Peptidase T (408 aa).

His78 provides a ligand contact to Zn(2+). Asp80 is a catalytic residue. Asp140 is a binding site for Zn(2+). Glu174 (proton acceptor) is an active-site residue. Glu175, Asp197, and His379 together coordinate Zn(2+).

The protein belongs to the peptidase M20B family. The cofactor is Zn(2+).

The protein localises to the cytoplasm. The enzyme catalyses Release of the N-terminal residue from a tripeptide.. Its function is as follows. Cleaves the N-terminal amino acid of tripeptides. This chain is Peptidase T, found in Staphylococcus aureus (strain bovine RF122 / ET3-1).